The chain runs to 182 residues: MNKLSTKLVVAIGIGAALYGILGLWGFSIAPNTFIKPALAILTVFGALFGPVAGLLIGLIGHTVTDTIAGWGIWWGWVISSGIIGFAMGFIQKRVGFSVKNGTYNKGDISYLAITGLIGIVIAIIFAGAFDIIVMGEPFDKIVIQVLGATIADVIVFLVLGLPITIGLAKSNKKHTHLKIEK.

A run of 5 helical transmembrane segments spans residues 9–29 (VVAI…GFSI), 40–60 (AILT…IGLI), 71–91 (WGIW…MGFI), 114–134 (ITGL…DIIV), and 142–162 (IVIQ…VLGL).

This sequence belongs to the UPF0397 family.

The protein resides in the cell membrane. The sequence is that of UPF0397 protein BCAH187_A2708 from Bacillus cereus (strain AH187).